Here is a 272-residue protein sequence, read N- to C-terminus: Probable ribosomal RNA small subunit methyltransferase A (272 aa).

Asn-23, Leu-25, Gly-50, Glu-71, Asp-95, and Asn-110 together coordinate S-adenosyl-L-methionine.

It belongs to the class I-like SAM-binding methyltransferase superfamily. rRNA adenine N(6)-methyltransferase family. RsmA subfamily.

The protein resides in the cytoplasm. Specifically dimethylates two adjacent adenosines in the loop of a conserved hairpin near the 3'-end of 16S rRNA in the 30S particle. May play a critical role in biogenesis of 30S subunits. The sequence is that of Probable ribosomal RNA small subunit methyltransferase A from Thermococcus onnurineus (strain NA1).